Reading from the N-terminus, the 569-residue chain is Proline--tRNA ligase (569 aa).

Belongs to the class-II aminoacyl-tRNA synthetase family. ProS type 1 subfamily. As to quaternary structure, homodimer.

The protein resides in the cytoplasm. It catalyses the reaction tRNA(Pro) + L-proline + ATP = L-prolyl-tRNA(Pro) + AMP + diphosphate. In terms of biological role, catalyzes the attachment of proline to tRNA(Pro) in a two-step reaction: proline is first activated by ATP to form Pro-AMP and then transferred to the acceptor end of tRNA(Pro). As ProRS can inadvertently accommodate and process non-cognate amino acids such as alanine and cysteine, to avoid such errors it has two additional distinct editing activities against alanine. One activity is designated as 'pretransfer' editing and involves the tRNA(Pro)-independent hydrolysis of activated Ala-AMP. The other activity is designated 'posttransfer' editing and involves deacylation of mischarged Ala-tRNA(Pro). The misacylated Cys-tRNA(Pro) is not edited by ProRS. The protein is Proline--tRNA ligase of Nitrosospira multiformis (strain ATCC 25196 / NCIMB 11849 / C 71).